A 799-amino-acid chain; its full sequence is Cadherin-8 (799 aa).

Positions 1 to 29 (MPERLAEMLLDLWTPLIILWITLPPCIYM) are cleaved as a signal peptide. Residues 30–61 (APMNQSQVLMSGSPLELNSLGEEQRILNRSKR) constitute a propeptide that is removed on maturation. N-linked (GlcNAc...) asparagine glycosylation is found at asparagine 33 and asparagine 57. Cadherin domains follow at residues 62 to 167 (GWVW…APEF), 168 to 276 (LNGP…PPKF), 277 to 391 (AQSL…PPVF), 392 to 494 (SSPT…DNAP), and 495 to 616 (EFAS…YVLP). Residues 62-621 (GWVWNQMFVL…AYVLPIGLSM (560 aa)) lie on the Extracellular side of the membrane. N-linked (GlcNAc...) asparagine glycosylation occurs at asparagine 188. N-linked (GlcNAc...) asparagine glycans are attached at residues asparagine 463, asparagine 473, and asparagine 544. The helical transmembrane segment at 622-642 (GALIAILACIILLLVIVVLFV) threads the bilayer. Residues 643–799 (TLRRHKNEPL…YSVGESDKET (157 aa)) lie on the Cytoplasmic side of the membrane. The residue at position 795 (serine 795) is a Phosphoserine.

Mainly expressed in brain. Found in certain nerve cell lines, such as retinoblasts, glioma cells and neuroblasts.

Its subcellular location is the cell membrane. Cadherins are calcium-dependent cell adhesion proteins. They preferentially interact with themselves in a homophilic manner in connecting cells; cadherins may thus contribute to the sorting of heterogeneous cell types. The polypeptide is Cadherin-8 (CDH8) (Homo sapiens (Human)).